A 739-amino-acid polypeptide reads, in one-letter code: RNA-directed RNA polymerase (739 aa).

In terms of domain architecture, RdRp catalytic spans 452–567 (PCFVGLDASR…YLEKEDLPKL (116 aa)).

Belongs to the tombusviridae RNA polymerase family.

The catalysed reaction is RNA(n) + a ribonucleoside 5'-triphosphate = RNA(n+1) + diphosphate. In terms of biological role, RNA-dependent RNA polymerase that plays an essential role in the virus replication. The protein is RNA-directed RNA polymerase of Pothos latent virus (isolate Pigeonpea/India) (PoLV).